A 545-amino-acid chain; its full sequence is Capsular polysaccharide phosphotransferase SacB (545 aa).

Belongs to the stealth family.

Its function is as follows. May be the polymerase that links individual UDP-N-acetyl-D-mannosamine monomers. In serotype A the capsule is composed of repeated units of (alpha 1-6)-linked N-acetyl-D-mannosamine-1-phosphate. The protein is Capsular polysaccharide phosphotransferase SacB (sacB) of Neisseria meningitidis serogroup A.